The primary structure comprises 531 residues: Pancreatic secretory granule membrane major glycoprotein GP2 (531 aa).

The signal sequence occupies residues 1-21 (MVGCDLLWLAAASCVLTLVSP). Asparagine 33 carries N-linked (GlcNAc...) asparagine glycosylation. A beta hairpin region spans residues 34–53 (SSNLDLDCGSPDSPSSGICF). 11 disulfide bridges follow: cysteine 41-cysteine 52, cysteine 56-cysteine 151, cysteine 79-cysteine 169, cysteine 101-cysteine 139, cysteine 107-cysteine 174, cysteine 132-cysteine 140, cysteine 184-cysteine 194, cysteine 188-cysteine 203, cysteine 205-cysteine 235, cysteine 223-cysteine 314, and cysteine 255-cysteine 278. A D10C region spans residues 54 to 74 (DPCQNHTVLNDPTRSTENNDS). Residues asparagine 58 and asparagine 72 are each glycosylated (N-linked (GlcNAc...) asparagine). The EGF-like domain occupies 180 to 224 (APKNCEITCRPEEECVFQNNNWSCVCRQDLHVSDSQSLQPLLDCG). A glycan (N-linked (GlcNAc...) asparagine) is linked at asparagine 200. Positions 222-315 (DCGDNEIKVK…FRVNVNFQCA (94 aa)) are ZP-N. Residues 222–478 (DCGDNEIKVK…PSCSTNRLRS (257 aa)) form the ZP domain. N-linked (GlcNAc...) asparagine glycans are attached at residues asparagine 256 and asparagine 285. The segment at 316-339 (YPLDMSVSLETALQPIVSSLTVDV) is flexible ZP-N/ZP-C linker. Positions 340–351 (DGAGEFNVKMAL) are internal hydrophobic patch (IHP). Residues 340–478 (DGAGEFNVKM…PSCSTNRLRS (139 aa)) form a ZP-C region. 3 cysteine pairs are disulfide-bonded: cysteine 395–cysteine 455, cysteine 416–cysteine 471, and cysteine 460–cysteine 467. Positions 485–493 (YNRVLDLGP) are external hydrophobic patch (EHP).

As to quaternary structure, interacts with SYCN. Interacts with bacterial adhesin fimH. Post-translationally, N-glycosylated. As to expression, specifically expressed by M (microfold) cells which are atypical epithelial cells of the intestine.

Its subcellular location is the zymogen granule membrane. It is found in the secreted. It localises to the cell membrane. The protein localises to the apical cell membrane. The protein resides in the membrane raft. Its subcellular location is the endosome. Functions as an intestinal M-cell transcytotic receptor specific of type-I-piliated bacteria that participates in the mucosal immune response toward these bacteria. At the apical membrane of M-cells it binds fimH, a protein of the bacteria type I pilus tip. Internalizes bound bacteria, like E.coli and S.typhimurium, from the lumen of the intestine and delivers them, through M-cells, to the underlying organized lymphoid follicles where they are captured by antigen-presenting dendritic cells to elicit a mucosal immune response. In Mus musculus (Mouse), this protein is Pancreatic secretory granule membrane major glycoprotein GP2.